Here is a 290-residue protein sequence, read N- to C-terminus: MAIDPNSIGAVTEPMLFEWTDRDTLLYAIGVGAGTGDLAFTTENSHGIDQQVLPTYAVICCPAFGAAAKVGTFNPAALLHGSQGIRLHAPLPAAGKLSVVTEVADIQDKGEGKNAIVVLRGRGCDPESGSLVAETLTTLVLRGQGGFGGARGERPAAPEFPDRHPDARIDMPTREDQALIYRLSGDRNPLHSDPWFATQLAGFPKPILHGLCTYGVAGRALVAELGGGVAANITSIAARFTKPVFPGETLSTVIWRTEPGRAVFRTEVAGSDGAEARVVLDDGAVEYVAG.

Residues 147-169 are disordered; that stretch reads FGGARGERPAAPEFPDRHPDARI. A compositionally biased stretch (basic and acidic residues) spans 151–169; it reads RGERPAAPEFPDRHPDARI. In terms of domain architecture, MaoC-like spans 161-271; the sequence is PDRHPDARID…AVFRTEVAGS (111 aa).

This sequence belongs to the enoyl-CoA hydratase/isomerase family.

The catalysed reaction is a (3R)-3-hydroxyacyl-CoA = a (2E)-enoyl-CoA + H2O. It carries out the reaction (3R)-hydroxyhexanoyl-CoA = (2E)-hexenoyl-CoA + H2O. The enzyme catalyses (2E)-octenoyl-CoA + H2O = (3R)-hydroxyoctanoyl-CoA. It catalyses the reaction (3R)-3-hydroxydecanoyl-CoA = (2E)-decenoyl-CoA + H2O. The catalysed reaction is (3R)-3-hydroxydodecanoyl-CoA = (2E)-dodecenoyl-CoA + H2O. It carries out the reaction (3R)-hydroxyhexadecanoyl-CoA = (2E)-hexadecenoyl-CoA + H2O. Its function is as follows. Shows trans-enoyl-CoA hydratase/3-hydroxyacyl-CoA dehydratase activity. In vitro, can hydrate various enoyl-CoA such as (2E)-hexenoyl-CoA, (2E)-octenoyl-CoA, (2E)-decenoyl-CoA, (2E)-dodecenoyl-CoA and (2E)-hexadecenoyl-CoA. May contribute to the persistence of the tuberculosis infection by inducing COX-2 expression in macrophages through MAPK-NF-kappaB signaling pathway. In Mycobacterium tuberculosis (strain ATCC 25618 / H37Rv), this protein is 3-hydroxyacyl-thioester dehydratase Y.